The primary structure comprises 129 residues: Small ribosomal subunit protein uS11 (129 aa).

The protein belongs to the universal ribosomal protein uS11 family. Part of the 30S ribosomal subunit. Interacts with proteins S7 and S18. Binds to IF-3.

In terms of biological role, located on the platform of the 30S subunit, it bridges several disparate RNA helices of the 16S rRNA. Forms part of the Shine-Dalgarno cleft in the 70S ribosome. In Desulfitobacterium hafniense (strain DSM 10664 / DCB-2), this protein is Small ribosomal subunit protein uS11.